The sequence spans 808 residues: Piwi-like protein 1 (808 aa).

One can recognise a PAZ domain in the interval 214 to 333; the sequence is RINRVLNENN…IPGELCYLCG (120 aa). The disordered stretch occupies residues 300-322; the sequence is SMVRPKEKTENEPEGPTETDQSL. The Piwi domain maps to 492–790; sequence HMALVFIPDD…LAELVGKIHR (299 aa).

Belongs to the argonaute family. Piwi subfamily. Expressed in dividing adult somatic stem cells (neoblasts).

The chain is Piwi-like protein 1 (wi-1) from Schmidtea mediterranea (Freshwater planarian flatworm).